Reading from the N-terminus, the 160-residue chain is Ribosomal RNA large subunit methyltransferase H (160 aa).

S-adenosyl-L-methionine contacts are provided by residues Leu77, Gly109, and 128–133 (FGRITL).

It belongs to the RNA methyltransferase RlmH family. As to quaternary structure, homodimer.

Its subcellular location is the cytoplasm. The catalysed reaction is pseudouridine(1915) in 23S rRNA + S-adenosyl-L-methionine = N(3)-methylpseudouridine(1915) in 23S rRNA + S-adenosyl-L-homocysteine + H(+). Specifically methylates the pseudouridine at position 1915 (m3Psi1915) in 23S rRNA. The sequence is that of Ribosomal RNA large subunit methyltransferase H from Oenococcus oeni (strain ATCC BAA-331 / PSU-1).